A 462-amino-acid chain; its full sequence is L-seryl-tRNA(Sec) selenium transferase (462 aa).

Lysine 292 is subject to N6-(pyridoxal phosphate)lysine.

Belongs to the SelA family. Requires pyridoxal 5'-phosphate as cofactor.

The protein resides in the cytoplasm. It catalyses the reaction L-seryl-tRNA(Sec) + selenophosphate + H(+) = L-selenocysteinyl-tRNA(Sec) + phosphate. It participates in aminoacyl-tRNA biosynthesis; selenocysteinyl-tRNA(Sec) biosynthesis; selenocysteinyl-tRNA(Sec) from L-seryl-tRNA(Sec) (bacterial route): step 1/1. Its function is as follows. Converts seryl-tRNA(Sec) to selenocysteinyl-tRNA(Sec) required for selenoprotein biosynthesis. The sequence is that of L-seryl-tRNA(Sec) selenium transferase from Geotalea uraniireducens (strain Rf4) (Geobacter uraniireducens).